A 548-amino-acid chain; its full sequence is pH-responsive protein 1 (548 aa).

An N-terminal signal peptide occupies residues 1–20 (MYSLIKSLATFATLFSLTLA). N-linked (GlcNAc...) asparagine glycosylation is present at Asn41. Cys82 and Cys111 form a disulfide bridge. Asn173 and Asn261 each carry an N-linked (GlcNAc...) asparagine glycan. 5 cysteine pairs are disulfide-bonded: Cys224–Cys358, Cys242–Cys273, Cys381–Cys432, Cys390–Cys456, and Cys409–Cys414. Residues 483–518 (GKASSSGGSSKSGSSSASASGSSSSSTSSGSSSSSG) are disordered. Ser517 carries the GPI-anchor amidated serine lipid modification. Positions 518–548 (GVKATQQMSMVKLVSIITIVTAFVGGMSVVF) are cleaved as a propeptide — removed in mature form.

The protein belongs to the glycosyl hydrolase 72 family.

The protein localises to the cell membrane. Functionally, required for apical cell growth and plays an essential role in morphogenesis. May be integral to the pathogenic ability of the organism. In Candida albicans (strain SC5314 / ATCC MYA-2876) (Yeast), this protein is pH-responsive protein 1 (PHR1).